The chain runs to 313 residues: tRNA dimethylallyltransferase (313 aa).

11–18 (GPTAGGKT) contacts ATP. 13 to 18 (TAGGKT) serves as a coordination point for substrate. Interaction with substrate tRNA regions lie at residues 36-39 (DSAL), 160-164 (QRIGR), and 243-248 (RCVGYR).

It belongs to the IPP transferase family. Monomer. Mg(2+) is required as a cofactor.

It carries out the reaction adenosine(37) in tRNA + dimethylallyl diphosphate = N(6)-dimethylallyladenosine(37) in tRNA + diphosphate. Its function is as follows. Catalyzes the transfer of a dimethylallyl group onto the adenine at position 37 in tRNAs that read codons beginning with uridine, leading to the formation of N6-(dimethylallyl)adenosine (i(6)A). This is tRNA dimethylallyltransferase from Neisseria meningitidis serogroup C / serotype 2a (strain ATCC 700532 / DSM 15464 / FAM18).